Here is a 255-residue protein sequence, read N- to C-terminus: Sulfate transporter CysZ (255 aa).

The next 4 helical transmembrane spans lie at 26–46 (LFVL…IYFA), 71–91 (LLWP…FTML), 150–170 (LFIL…WLLF), and 211–231 (IVYL…AAVA).

Belongs to the CysZ family.

Its subcellular location is the cell inner membrane. Functionally, high affinity, high specificity proton-dependent sulfate transporter, which mediates sulfate uptake. Provides the sulfur source for the cysteine synthesis pathway. This is Sulfate transporter CysZ from Pseudomonas fluorescens (strain SBW25).